A 352-amino-acid chain; its full sequence is MDLGTEIKSDTRQEEQRHVFEDYPEPLRYTTWVLRVSIHCEGCKRKIKKILSKIDGVYTTNIDVKQQKVTVIGNVEPEILIKKIMKAGRHAELWPTSMENNINNDCNYQKKPKKDNEETSGDEDDDENNNNNNGGGDVGGGGGGGGGNFDQVKQVVTFVNGQLQPQGDGAPKKKKKKKKKKKSLGNTTVVMEGGGGGGGGGGPPQNDGPPETVIYSAPQDHHIIHGPPPHLHHHQQQNHPYPTVHSPPRHHPQQMYGPGPGLPPPSFYHTQPQTAPSYTVSYNTVHGPINNGGNETASYYTAPPSHPTSYYSYEYVDTGYESPPPEFYSYRSQPSESFESLSEGNPNSCCVM.

An HMA domain is found at 29-92 (YTTWVLRVSI…KIMKAGRHAE (64 aa)). Residues cysteine 40 and cysteine 43 each contribute to the a metal cation site. Disordered stretches follow at residues 96–150 (TSME…GNFD), 162–211 (QLQP…GPPE), and 229–252 (PHLH…RHHP). The span at 97-107 (SMENNINNDCN) shows a compositional bias: polar residues. The segment covering 118–128 (ETSGDEDDDEN) has biased composition (acidic residues). Gly residues predominate over residues 133 to 148 (NGGGDVGGGGGGGGGN). Residues 172-183 (KKKKKKKKKKKS) show a composition bias toward basic residues. Residues 192 to 203 (EGGGGGGGGGGP) are compositionally biased toward gly residues. Cysteine 349 carries the cysteine methyl ester modification. Cysteine 349 carries S-farnesyl cysteine lipidation. Residues 350-352 (CVM) constitute a propeptide, removed in mature form.

Belongs to the HIPP family.

Heavy-metal-binding protein. The chain is Heavy metal-associated isoprenylated plant protein 36 from Arabidopsis thaliana (Mouse-ear cress).